A 938-amino-acid polypeptide reads, in one-letter code: Collagen alpha-1(I) chain (938 aa).

Residues 1–938 form a disordered region; sequence GGISVPGPMG…PGPPGPPGPP (938 aa). 11 positions are modified to 4-hydroxyproline: Pro18, Pro21, Pro24, Pro33, Pro36, Pro39, Pro54, Pro69, Pro75, Pro84, and Pro90. The span at 26 to 45 shows a compositional bias: low complexity; that stretch reads PQGFQGPPGEPGEPGASGPM. Residues 57–71 show a composition bias toward basic and acidic residues; it reads NGDDGEAGKPGRPGE. Lys93 bears the 5-hydroxylysine; alternate mark. The O-linked (Gal...) hydroxylysine; alternate glycan is linked to Lys93. Position 99 is a phosphoserine (Ser99). The segment covering 107-135 has biased composition (low complexity); that stretch reads DAGPAGPKGRPGASGPAGARGNDGATGAA. Residues Pro117, Pro138, Pro147, Pro150, Pro177, Pro180, Pro192, Pro198, Pro207, Pro213, Pro216, and Pro231 each carry the 4-hydroxyproline modification. Residues 137 to 149 are compositionally biased toward pro residues; that stretch reads PPGPTGPAGPPGF. The segment covering 183–222 has biased composition (low complexity); the sequence is AGAAGPAGNPGADGQPGAKGANGAPGIAGAPGFPGARGPS. 5-hydroxylysine is present on Lys234. Residues Pro240, Pro243, Pro255, Pro264, Pro279, Pro285, Pro294, and Pro300 each carry the 4-hydroxyproline modification. The span at 289–298 shows a compositional bias: gly residues; it reads GERGGPGSRG. Lys309 bears the 5-hydroxylysine mark. 4-hydroxyproline occurs at positions 314, 323, 329, 335, 344, 347, 356, 365, 371, 383, 392, 401, 404, 422, 439, 445, 451, 458, 464, 476, 485, 497, 503, 509, and 518. The span at 338–364 shows a compositional bias: low complexity; that stretch reads KGLTGSPGSPGPDGKTGPPGPAGQDGR. Low complexity predominate over residues 373 to 392; sequence ARGQAGVMGFPGPKGAAGEP. A 5-hydroxylysine modification is found at Lys530. A 4-hydroxyproline mark is found at Pro536, Pro551, and Pro557. Low complexity predominate over residues 563 to 577; the sequence is SGPSGPAGPTGARGA. Ser566 is subject to Phosphoserine. Residues Pro578, Pro584, Pro587, Pro596, Pro602, Pro620, Pro629, and Pro638 each carry the 4-hydroxyproline modification. Over residues 590 to 617 the composition is skewed to low complexity; it reads AGFAGPPGADGQPGAKGEPGDAGAKGDA. The span at 619-631 shows a compositional bias: pro residues; it reads PPGPAGPTGPPGP. Lys641 carries the 5-hydroxylysine modification. Low complexity predominate over residues 646-662; that stretch reads SAGPPGATGFPGAAGRV. 4-hydroxyproline is present on residues Pro650 and Pro656. Pro664 bears the 3-hydroxyproline mark. 4-hydroxyproline is present on residues Pro665, Pro674, Pro677, Pro693, Pro703, Pro712, Pro730, Pro739, Pro742, Pro748, Pro763, Pro769, Pro775, Pro784, and Pro790. Residues 762-772 are compositionally biased toward pro residues; it reads PPGPMGPPGLA. At Lys799 the chain carries 5-hydroxylysine. Residues 807-822 show a composition bias toward pro residues; it reads PGPPGAPGAPGAPGPV. A 4-hydroxyproline mark is found at Pro810, Pro813, and Pro816. Over residues 843-867 the composition is skewed to low complexity; it reads AGPAGARGPAGPQGPRRGFSGLQGP. 4-hydroxyproline occurs at positions 871, 874, 892, and 907. Low complexity predominate over residues 874 to 907; that stretch reads PGEQGPSGASGPAGPRGPPGSAGSPGKDGLNGLP. Position 912 is a 3-hydroxyproline (Pro912). Position 913 is a 4-hydroxyproline (Pro913). Positions 923 to 938 are enriched in pro residues; it reads VGPPGPPGPPGPPGPP. The residue at position 925 (Pro925) is a 3-hydroxyproline. Pro926 carries the 4-hydroxyproline modification. A 3-hydroxyproline modification is found at Pro928. 4-hydroxyproline is present on Pro929. A 3-hydroxyproline modification is found at Pro931. Residues Pro932, Pro935, and Pro938 each carry the 4-hydroxyproline modification.

This sequence belongs to the fibrillar collagen family. In terms of assembly, trimers of one alpha 2(I) and two alpha 1(I) chains. Post-translationally, contains mostly 4-hydroxyproline. Proline residues at the third position of the tripeptide repeating unit (G-X-Y) are hydroxylated in some or all of the chains. In terms of processing, contains 3-hydroxyproline at a few sites. This modification occurs on the first proline residue in the sequence motif Gly-Pro-Hyp, where Hyp is 4-hydroxyproline. Lysine residues at the third position of the tripeptide repeating unit (G-X-Y) are 5-hydroxylated in some or all of the chains. Post-translationally, O-glycosylated on hydroxylated lysine residues. The O-linked glycan consists of a Glc-Gal disaccharide. In terms of tissue distribution, expressed in bones.

The protein resides in the secreted. Its subcellular location is the extracellular space. The protein localises to the extracellular matrix. Type I collagen is a member of group I collagen (fibrillar forming collagen). The polypeptide is Collagen alpha-1(I) chain (Megalonyx jeffersonii (Jefferson's ground sloth)).